The chain runs to 148 residues: Large ribosomal subunit protein bL9 (148 aa).

It belongs to the bacterial ribosomal protein bL9 family.

In terms of biological role, binds to the 23S rRNA. The chain is Large ribosomal subunit protein bL9 from Desulfatibacillum aliphaticivorans.